Reading from the N-terminus, the 135-residue chain is Probable transporter XF_0766 (135 aa).

A run of 4 helical transmembrane segments spans residues Tyr4–Leu24, Ala45–Phe65, Val71–Thr91, and Ile114–Tyr134.

This sequence belongs to the TsuA/YedE (TC 9.B.102) family.

The protein localises to the cell inner membrane. This chain is Probable transporter XF_0766, found in Xylella fastidiosa (strain 9a5c).